A 274-amino-acid chain; its full sequence is Enoyl-CoA isomerase/hydratase fer4 (274 aa).

Substrate is bound by residues 77 to 81 and glycine 124; that span reads AGADL. The stretch at 79-109 forms a coiled coil; sequence ADLKERREMSEAEVIEFLQDLRHMLEQVEKL.

The protein belongs to the enoyl-CoA hydratase/isomerase family.

The enzyme catalyses a (3S)-3-hydroxyacyl-CoA = a (2E)-enoyl-CoA + H2O. The catalysed reaction is a 4-saturated-(3S)-3-hydroxyacyl-CoA = a (3E)-enoyl-CoA + H2O. The protein operates within siderophore biosynthesis. Enoyl-CoA isomerase/hydratase; part of the gene cluster that mediates the biosynthesis of siderophore ferrichrome A which is contributing to organismal virulence. The first step of ferrichrome A biosynthesis is performed by the HMG-CoA synthase hcs1 which catalyzes the generation of HMG-CoA and CoA using acetoacetyl-CoA and acetyl-CoA as substrates. The enoyl-CoA isomerase/hydratase fer4 then catalyzes the conversion of hcs1-produced HMG-CoA to methylglutaconyl-CoA. The acyltransferase fer5 then fuses the fer4-generated methylglutaconyl-CoA with sid1-generated hydroxyornithine to yield methylglutaconyl hydroxyornithine. Methylglutaconyl hydroxyornithine is then available for use by the NRPS fer3 to generate ferrichrome A. In Mycosarcoma maydis (Corn smut fungus), this protein is Enoyl-CoA isomerase/hydratase fer4.